Reading from the N-terminus, the 378-residue chain is Transmembrane protein adipocyte-associated 1 homolog (378 aa).

N-linked (GlcNAc...) asparagine glycosylation is found at Asn16, Asn25, and Asn36. A run of 7 helical transmembrane segments spans residues 61–81 (VMLLIPNVAFLVFLMWKLPSA), 88–108 (TSSPIFVAFYILVFVVAAVGI), 136–156 (FFLLAIELSVIILGLAFGHLE), 164–184 (VLAITAVLSLAYSITQGTLEI), 205–225 (HFWLASSCFFFLVYSLIVILP), 247–267 (ILALLNLVQGLGSALLCADII), and 278–298 (FLYFSVFAPLIYVTFLKGFFG). A disordered region spans residues 316 to 335 (DSDVHLPHTSSSGLGRKDLD).

Belongs to the UPF0359 family.

It localises to the membrane. The sequence is that of Transmembrane protein adipocyte-associated 1 homolog (tpra1) from Danio rerio (Zebrafish).